We begin with the raw amino-acid sequence, 376 residues long: MIQKPQMYVYIYLFVLIAAGPVDLNEDSEREANVEKEGLCNACAWRQNTRYSRIEAIKIQILSKLRLETAPNISKDAIRQLLPRAPPLRELIDQYDVQRDDSSDGSLEDDDYHATTETIITMPTESDFLMQADGKPKCCFFKFSSKIQYNKVVKAQLWIYLRAVKTPTTVFVQILRLIKPMKDGTRYTGIRSLKLDMSPGTGIWQSIDVKTVLQNWLKQPESNLGIEIKALDENGHDLAVTFPGPGEDGLNPFLEVKVTDTPKRSRRDFGLDCDEHSTESRCCRYPLTVDFEAFGWDWIIAPKRYKANYCSGECEFVFLQKYPHTHLVHQANPRGSAGPCCTPTKMSPINMLYFNGKEQIIYGKIPAMVVDRCGCS.

Positions 1 to 24 (MIQKPQMYVYIYLFVLIAAGPVDL) are cleaved as a signal peptide. The propeptide occupies 25–267 (NEDSEREANV…VTDTPKRSRR (243 aa)). A glycan (N-linked (GlcNAc...) asparagine) is linked at Asn-72. 4 cysteine pairs are disulfide-bonded: Cys-273–Cys-283, Cys-282–Cys-341, Cys-310–Cys-373, and Cys-314–Cys-375.

Belongs to the TGF-beta family. As to quaternary structure, homodimer; disulfide-linked. Interacts with WFIKKN2, leading to inhibit its activity. Interacts with FSTL3. Synthesized as large precursor molecule that undergoes proteolytic cleavage to generate an N-terminal propeptide and a disulfide linked C-terminal dimer, which is the biologically active molecule. The circulating form consists of a latent complex of the C-terminal dimer and other proteins, including its propeptide, which maintain the C-terminal dimer in a latent, inactive state. Ligand activation requires additional cleavage of the prodomain by a tolloid-like metalloproteinase.

It is found in the secreted. Functionally, acts specifically as a negative regulator of skeletal muscle growth. In Rattus norvegicus (Rat), this protein is Growth/differentiation factor 8 (Mstn).